A 59-amino-acid chain; its full sequence is UPF0434 protein RHOS4_00640 (59 aa).

This sequence belongs to the UPF0434 family.

The protein is UPF0434 protein RHOS4_00640 of Cereibacter sphaeroides (strain ATCC 17023 / DSM 158 / JCM 6121 / CCUG 31486 / LMG 2827 / NBRC 12203 / NCIMB 8253 / ATH 2.4.1.) (Rhodobacter sphaeroides).